We begin with the raw amino-acid sequence, 131 residues long: Chromatin accessibility complex protein 1 (131 aa).

Ala-2 is subject to N-acetylalanine. Residues 100-124 adopt a coiled-coil conformation; that stretch reads ASKYLKMLKEEKREEDEENDNDNES. N6-acetyllysine is present on Lys-102. A disordered region spans residues 109 to 131; it reads EEKREEDEENDNDNESDHDEADS. The segment covering 112 to 131 has biased composition (acidic residues); sequence REEDEENDNDNESDHDEADS. Ser-124 is modified (phosphoserine).

In terms of assembly, heterodimer with POLE3; binds to DNA. Component of the CHRAC ISWI chromatin remodeling complex at least composed of SMARCA5/SNF2H, BAZ1A/ACF1, CHRAC1 and POLE3; the complex preferentially binds DNA through the CHRAC1-POLE3 heterodimer and possesses ATP-dependent nucleosome-remodeling activity. Within the complex, the heterodimer with POLE3 interacts with SMARCA5/SNF2H; the interaction is direct and enhances nucleosome sliding activity by the SMARCA5/SNF2H and BAZ1A/ACF1 interaction. Within the complex, the heterodimer with POLE3 interacts with BAZ1A/ACF1; the interactions are direct. In terms of tissue distribution, expressed in heart, brain, placenta, lung, liver, skeletal muscle, kidney and pancreas.

The protein resides in the nucleus. In terms of biological role, forms a complex with DNA polymerase epsilon subunit POLE3 and binds naked DNA, which is then incorporated into chromatin, aided by the nucleosome remodeling activity of ISWI/SNF2H and ACF1. Does not enhance nucleosome sliding activity of the ACF-5 ISWI chromatin remodeling complex. The polypeptide is Chromatin accessibility complex protein 1 (CHRAC1) (Homo sapiens (Human)).